The chain runs to 450 residues: Phosphoglucosamine mutase (450 aa).

Serine 102 functions as the Phosphoserine intermediate in the catalytic mechanism. 4 residues coordinate Mg(2+): serine 102, aspartate 244, aspartate 246, and aspartate 248. Phosphoserine is present on serine 102.

Belongs to the phosphohexose mutase family. Mg(2+) serves as cofactor. Activated by phosphorylation.

The enzyme catalyses alpha-D-glucosamine 1-phosphate = D-glucosamine 6-phosphate. Its function is as follows. Catalyzes the conversion of glucosamine-6-phosphate to glucosamine-1-phosphate. The sequence is that of Phosphoglucosamine mutase from Nitratidesulfovibrio vulgaris (strain DSM 19637 / Miyazaki F) (Desulfovibrio vulgaris).